A 140-amino-acid polypeptide reads, in one-letter code: uncharacterized protein (140 aa).

N-linked (GlcNAc...) asparagine glycosylation occurs at Asn-27. 3 consecutive transmembrane segments (helical) span residues 45–65 (FSLYWTLIFNGAFYVTAGVYA), 76–96 (VWIFVMYVLYGGVQGLTTGTV), and 116–136 (VPLCCAVVQILFDVVLSYSMV).

Belongs to the TMEM170 family.

It is found in the membrane. This is an uncharacterized protein from Saccharomyces cerevisiae (strain ATCC 204508 / S288c) (Baker's yeast).